The primary structure comprises 383 residues: WAT1-related protein At3g18200 (383 aa).

The segment covering 1 to 16 has biased composition (basic residues); it reads MCYQTSKKKRRSRKRR. The interval 1–23 is disordered; it reads MCYQTSKKKRRSRKRRAQEEKEK. The next 10 membrane-spanning stretches (helical) occupy residues 33-53, 65-85, 91-111, 126-146, 158-178, 204-224, 237-257, 272-292, 300-320, and 325-345; these read VKLV…HIVS, VYPV…AYFF, PPLT…GITA, TFAS…ACAL, GVAK…ITLY, LTLG…WMVL, TLTS…ALFV, LFTI…LQTW, VFVA…AFLI, and LYSG…LVLW. EamA domains are found at residues 44-173 and 216-344; these read FCFA…GGAT and LSWA…YLVL.

Belongs to the drug/metabolite transporter (DMT) superfamily. Plant drug/metabolite exporter (P-DME) (TC 2.A.7.4) family.

The protein resides in the membrane. In Arabidopsis thaliana (Mouse-ear cress), this protein is WAT1-related protein At3g18200.